Reading from the N-terminus, the 380-residue chain is MNLILASFSLAPCFCVRFFPSNHNNLNLLFPGQRKIQVSCGGKSEVLKSDTMEPHEAETFVNKRTLYAPIEPYSSGNLKVSDVHTLYWEQSGKPDGHPVVFLHGGPGGGTAPSNRRFFDPEFYRIVLFDQRGAGKSTPHACLEENTTWDLVNDIEKLREHLKIPEWLVFGGSWGSTLALAYSQSHPDKVTGLVLRGIFLLRKKEIDWFYEGGAAAIYPDAWEEFRDLIPENERGSSLVDAYHKRLNSDDLEIQYAAARAWTKWEMMTAYLRPNLENVQKAEDDKFSLAFARIENHYFVNKGFFPSDSHLLDNVDKIRHIKTTIVQGRYDVCCPMMSAWDLHKAWPEAELKIVYDAGHSANEPGISAELVVANEKMKALMG.

Positions 98 to 360 (PVVFLHGGPG…IVYDAGHSAN (263 aa)) constitute an AB hydrolase-1 domain. S172 acts as the Nucleophile in catalysis. D329 is an active-site residue. H357 (proton donor) is an active-site residue.

It belongs to the peptidase S33 family.

It is found in the cytoplasm. It carries out the reaction Release of N-terminal proline from a peptide.. In terms of biological role, specifically catalyzes the removal of N-terminal proline residues from peptides. This Arabidopsis thaliana (Mouse-ear cress) protein is Proline iminopeptidase (PIP).